The chain runs to 248 residues: Probable phosphatase VFMJ11_A0899 (248 aa).

Residues His8, His10, His16, His41, Glu74, His101, His131, Asp193, and His195 each contribute to the Zn(2+) site.

The protein belongs to the PHP family. Requires Zn(2+) as cofactor.

This chain is Probable phosphatase VFMJ11_A0899, found in Aliivibrio fischeri (strain MJ11) (Vibrio fischeri).